The following is a 328-amino-acid chain: DNA-directed RNA polymerase subunit alpha (328 aa).

Residues 1–230 (MIQITGRKFK…IILDHFMFIE (230 aa)) form an alpha N-terminal domain (alpha-NTD) region. The interval 257–328 (PEDVMSKKVE…FGLSLRKGDK (72 aa)) is alpha C-terminal domain (alpha-CTD).

This sequence belongs to the RNA polymerase alpha chain family. As to quaternary structure, homodimer. The RNAP catalytic core consists of 2 alpha, 1 beta, 1 beta' and 1 omega subunit. When a sigma factor is associated with the core the holoenzyme is formed, which can initiate transcription.

The enzyme catalyses RNA(n) + a ribonucleoside 5'-triphosphate = RNA(n+1) + diphosphate. Its function is as follows. DNA-dependent RNA polymerase catalyzes the transcription of DNA into RNA using the four ribonucleoside triphosphates as substrates. This chain is DNA-directed RNA polymerase subunit alpha, found in Fervidobacterium nodosum (strain ATCC 35602 / DSM 5306 / Rt17-B1).